The following is a 155-amino-acid chain: Transcription antitermination protein NusB (155 aa).

The protein belongs to the NusB family.

Involved in transcription antitermination. Required for transcription of ribosomal RNA (rRNA) genes. Binds specifically to the boxA antiterminator sequence of the ribosomal RNA (rrn) operons. This is Transcription antitermination protein NusB from Halorhodospira halophila (strain DSM 244 / SL1) (Ectothiorhodospira halophila (strain DSM 244 / SL1)).